The primary structure comprises 240 residues: MAREKIQIRKIDNATARQVTFSKRRRGLFKKAEELSVLCDADVALIIFSSTGKLFEFCSSSMKEVLERHNLQSKNLEKLDQPSLELQLVENSDHARMSKEIADKSHRLRQMRGEELQGLDIEELQQLEKALETGLTRVIETKSDKIMSEISELQKKGMQLMDENKRLRQQGTQLTEENERLGMQICNNVHAHGGAESENAAVYEEGQSSESITNAGNSTGAPVDSESSDTSLRLGLPYGG.

Residues 3 to 57 form the MADS-box domain; it reads REKIQIRKIDNATARQVTFSKRRRGLFKKAEELSVLCDADVALIIFSSTGKLFEF. The K-box domain maps to 87-180; sequence QLVENSDHAR…GTQLTEENER (94 aa). The tract at residues 202–240 is disordered; that stretch reads VYEEGQSSESITNAGNSTGAPVDSESSDTSLRLGLPYGG. The span at 206 to 220 shows a compositional bias: polar residues; that stretch reads GQSSESITNAGNSTG.

Forms a heterodimer with AP1 and SVP. Interacts with the SEU-LUG corepressor complex when complexed to AP1. Interacts with AGL15. Interacts with AGL16. As to expression, detected in roots and leaves. Expressed at very low levels in flowers and siliques. Present in floral meristems.

Its subcellular location is the nucleus. Transcription repressor that inhibit floral transition in the autonomous flowering pathway, independent of photoperiod and temperature. Acts in a dosage-dependent manner. Together with AGL24 and AP1, controls the identity of the floral meristem and regulates expression of class B, C and E genes. Promotes EFM expression to suppress flowering. The sequence is that of MADS-box protein SVP from Arabidopsis thaliana (Mouse-ear cress).